The chain runs to 451 residues: GABA transporter 1 (451 aa).

11 helical membrane passes run C35–F55, F57–S77, V115–G135, L153–F173, L182–G202, V222–P242, M262–F282, F308–L328, L356–F376, L382–F402, and F411–M431.

The protein belongs to the amino acid/polyamine transporter 2 family. Amino acid/auxin permease (AAAP) (TC 2.A.18.2) subfamily. As to expression, highly expressed in flowers and at lower levels in roots, leaves and stems.

The protein resides in the cell membrane. Functionally, high affinity gamma-aminobutyric acid (GABA) transporter probably involved in GABA uptake into cells. When expressed in a heterologous system (Xenopus oocytes), imports GABA, butylamine, beta- and L-Alanine, 5-aminovaleric acid, 6-aminocaproic acid and 8-aminocaprylic acid, but does not mediate the transport of proline or glycine betaine. The protein is GABA transporter 1 (GAT1) of Arabidopsis thaliana (Mouse-ear cress).